The following is a 204-amino-acid chain: Holliday junction branch migration complex subunit RuvA (204 aa).

Residues 1–64 (MFAFLRGELV…EDLQQLFGFL (64 aa)) are domain I. Residues 65-143 (DEEELQLFRL…KIQPTSSAKA (79 aa)) are domain II. Positions 144–151 (GAPSAVLS) are flexible linker. Positions 151–204 (SATQLIDDAVAALTTLGFPKASAQKAVSKVLETTPGLSVEELVRTSLAAMHNNL) are domain III.

The protein belongs to the RuvA family. Homotetramer. Forms an RuvA(8)-RuvB(12)-Holliday junction (HJ) complex. HJ DNA is sandwiched between 2 RuvA tetramers; dsDNA enters through RuvA and exits via RuvB. An RuvB hexamer assembles on each DNA strand where it exits the tetramer. Each RuvB hexamer is contacted by two RuvA subunits (via domain III) on 2 adjacent RuvB subunits; this complex drives branch migration. In the full resolvosome a probable DNA-RuvA(4)-RuvB(12)-RuvC(2) complex forms which resolves the HJ.

The protein localises to the cytoplasm. Its function is as follows. The RuvA-RuvB-RuvC complex processes Holliday junction (HJ) DNA during genetic recombination and DNA repair, while the RuvA-RuvB complex plays an important role in the rescue of blocked DNA replication forks via replication fork reversal (RFR). RuvA specifically binds to HJ cruciform DNA, conferring on it an open structure. The RuvB hexamer acts as an ATP-dependent pump, pulling dsDNA into and through the RuvAB complex. HJ branch migration allows RuvC to scan DNA until it finds its consensus sequence, where it cleaves and resolves the cruciform DNA. The polypeptide is Holliday junction branch migration complex subunit RuvA (Chlorobaculum parvum (strain DSM 263 / NCIMB 8327) (Chlorobium vibrioforme subsp. thiosulfatophilum)).